A 63-amino-acid polypeptide reads, in one-letter code: Translational regulator CsrA (63 aa).

This sequence belongs to the CsrA/RsmA family. Homodimer; the beta-strands of each monomer intercalate to form a hydrophobic core, while the alpha-helices form wings that extend away from the core.

The protein resides in the cytoplasm. In terms of biological role, a key translational regulator that binds mRNA to regulate translation initiation and/or mRNA stability. Mediates global changes in gene expression, shifting from rapid growth to stress survival by linking envelope stress, the stringent response and the catabolite repression systems. Usually binds in the 5'-UTR; binding at or near the Shine-Dalgarno sequence prevents ribosome-binding, repressing translation, binding elsewhere in the 5'-UTR can activate translation and/or stabilize the mRNA. Its function is antagonized by small RNA(s). This chain is Translational regulator CsrA, found in Alteromonas mediterranea (strain DSM 17117 / CIP 110805 / LMG 28347 / Deep ecotype).